We begin with the raw amino-acid sequence, 463 residues long: Cysteine--tRNA ligase (463 aa).

Zn(2+) is bound at residue Cys-33. The short motif at 35 to 45 is the 'HIGH' region element; sequence PTVYDFAHIGN. Residues Cys-221, His-246, and Glu-250 each contribute to the Zn(2+) site. Positions 279-283 match the 'KMSKS' region motif; the sequence is KMSKS. Lys-282 contacts ATP.

The protein belongs to the class-I aminoacyl-tRNA synthetase family. As to quaternary structure, monomer. Zn(2+) serves as cofactor.

It is found in the cytoplasm. It carries out the reaction tRNA(Cys) + L-cysteine + ATP = L-cysteinyl-tRNA(Cys) + AMP + diphosphate. In Rhizobium johnstonii (strain DSM 114642 / LMG 32736 / 3841) (Rhizobium leguminosarum bv. viciae), this protein is Cysteine--tRNA ligase.